The chain runs to 766 residues: MGSAQARQRLLAIFGQVQAYIFQVEMLKRCDPLALLPLVGSLKLNALTIRMLRRKLGGALIEQAQHQQTPLACALTMALEYAEVEGERVLRAVDDVNLAGPEGFFRATMRLDEPCEYHVRVHLDTYGGPIDAEVQFLHDAENFLKQLNYCHLITGFEAGLDALESVARFLTRTVGSGIVVPPELCDPTHPCSVCFEELCVTANQGEAVHRRLLECTCDHITRQMAVRVANIDIARHLPHALSVASERRAAAEAALRALEARRVQGHNGKSAGTEDPTQQVASRLLESHHVFKPASRCLYAVSELKFWLASTKHGDMGQPRAIDTFTENLETLDKQEKFFHLQAATVELALFGRTLDHFDRLFADQLLGLDVIDGMLVGSCAVSPDDHIEALIKACYTHHMSAPLLQRLTDPDTSNREALKQLLGRIGVDTDDGAGELGDALDVDLDNLGGAPPVNSTPCGEDALCRTVSEERPWDKLLERATADASQRRRMYAERLSKRSIASLGRCVREQRRELEKTLRVNVYGEVLLHTYVSSYNGFCARRGFCAAVSRAGTIIDNRSSTSAFDSHQFMKAALLRHPIDQSLMPSITHKFFELINGPVFDNAGHNFAQPPNTALYYSVENVGLLPHLKEELARFMITAAKGDWSISEFQRFYCFEGVTGVTATQRLAWKYIGELILAAAVFSSVFHCGEVRLLRADRTYPDSSGAQRCVSGIYITYEASCPLVAVLSAAPHGAIGAETVVIYDSDVFSLLYAVLQQLAPGSGAN.

The segment at 191–219 adopts a C3H1-type zinc-finger fold; sequence CSVCFEELCVTANQGEAVHRRLLECTCDH. Residue 683–690 coordinates ATP; it reads FSSVFHCG.

It belongs to the herpesviridae TRM1 protein family. Associates with TRM2 and TRM3 to form the tripartite terminase complex. Interacts with portal protein.

Its subcellular location is the host nucleus. Its function is as follows. Component of the molecular motor that translocates viral genomic DNA in empty capsid during DNA packaging. Forms a tripartite terminase complex together with TRM2 and TRM3 in the host cytoplasm. Once the complex reaches the host nucleus, it interacts with the capsid portal vertex. This portal forms a ring in which genomic DNA is translocated into the capsid. TRM1 carries an endonuclease activity that plays an important role for the cleavage of concatemeric viral DNA into unit length genomes. The chain is Tripartite terminase subunit 1 from Equus caballus (Horse).